The following is a 149-amino-acid chain: Large ribosomal subunit protein uL15 (149 aa).

A compositionally biased stretch (basic and acidic residues) spans 1-12 (MSEPIKLHDLRP). The tract at residues 1 to 55 (MSEPIKLHDLRPAKGANKPKTRVGRGEASKGKTAGRGTKGTKARKQVSAAFEGGQ) is disordered.

It belongs to the universal ribosomal protein uL15 family. In terms of assembly, part of the 50S ribosomal subunit.

Its function is as follows. Binds to the 23S rRNA. The chain is Large ribosomal subunit protein uL15 from Corynebacterium kroppenstedtii (strain DSM 44385 / JCM 11950 / CIP 105744 / CCUG 35717).